Here is a 331-residue protein sequence, read N- to C-terminus: Putative phosphoribosylaminoimidazole-succinocarboxamide synthase (331 aa).

It belongs to the SAICAR synthetase family. Highly divergent.

It catalyses the reaction 5-amino-1-(5-phospho-D-ribosyl)imidazole-4-carboxylate + L-aspartate + ATP = (2S)-2-[5-amino-1-(5-phospho-beta-D-ribosyl)imidazole-4-carboxamido]succinate + ADP + phosphate + 2 H(+). It functions in the pathway purine metabolism; IMP biosynthesis via de novo pathway; 5-amino-1-(5-phospho-D-ribosyl)imidazole-4-carboxamide from 5-amino-1-(5-phospho-D-ribosyl)imidazole-4-carboxylate: step 1/2. This Archaeoglobus fulgidus (strain ATCC 49558 / DSM 4304 / JCM 9628 / NBRC 100126 / VC-16) protein is Putative phosphoribosylaminoimidazole-succinocarboxamide synthase (purC).